The sequence spans 246 residues: Pyridoxine 5'-phosphate synthase (246 aa).

3-amino-2-oxopropyl phosphate contacts are provided by Asn-8 and Arg-19. The Proton acceptor role is filled by His-44. Residues Arg-46 and His-51 each coordinate 1-deoxy-D-xylulose 5-phosphate. Glu-76 serves as the catalytic Proton acceptor. Thr-106 is a binding site for 1-deoxy-D-xylulose 5-phosphate. Catalysis depends on His-198, which acts as the Proton donor. Residues Asp-199 and 221–222 (GH) each bind 3-amino-2-oxopropyl phosphate.

It belongs to the PNP synthase family. Homooctamer; tetramer of dimers.

The protein localises to the cytoplasm. It catalyses the reaction 3-amino-2-oxopropyl phosphate + 1-deoxy-D-xylulose 5-phosphate = pyridoxine 5'-phosphate + phosphate + 2 H2O + H(+). It participates in cofactor biosynthesis; pyridoxine 5'-phosphate biosynthesis; pyridoxine 5'-phosphate from D-erythrose 4-phosphate: step 5/5. In terms of biological role, catalyzes the complicated ring closure reaction between the two acyclic compounds 1-deoxy-D-xylulose-5-phosphate (DXP) and 3-amino-2-oxopropyl phosphate (1-amino-acetone-3-phosphate or AAP) to form pyridoxine 5'-phosphate (PNP) and inorganic phosphate. In Brucella abortus (strain S19), this protein is Pyridoxine 5'-phosphate synthase.